Reading from the N-terminus, the 372-residue chain is Tribbles homolog 1 (372 aa).

Disordered regions lie at residues 1-26 (MRVG…FPAA) and 49-85 (RLSE…CVSS). Positions 59–74 (YLSPPGSPCSPQPPPS) are enriched in pro residues. Positions 91–338 (IADYLLLPLA…APQILLHPWF (248 aa)) constitute a Protein kinase domain. Residues 355-360 (DQIVPE) carry the COP1-binding motif.

This sequence belongs to the protein kinase superfamily. CAMK Ser/Thr protein kinase family. Tribbles subfamily. As to quaternary structure, monomer. Interacts (via protein kinase domain) with CEBPA. Interacts with COP1.

In terms of biological role, adapter protein involved in protein degradation by interacting with COP1 ubiquitin ligase. Promotes CEBPA degradation and inhibits its function. Controls macrophage, eosinophil and neutrophil differentiation via the COP1-binding domain. Regulates myeloid cell differentiation by altering the expression of CEBPA in a COP1-dependent manner. Interacts with MAPK kinases and regulates activation of MAP kinases, but has no kinase activity. This chain is Tribbles homolog 1, found in Mus musculus (Mouse).